The sequence spans 667 residues: Receptor for retinol uptake STRA6 (667 aa).

Polar residues predominate over residues 1–13 (MSSQPAGNQTSPG). The segment at 1–22 (MSSQPAGNQTSPGPTEDYSYGS) is disordered. Residues 1–50 (MSSQPAGNQTSPGPTEDYSYGSWYIDEPQGGEELQPEGEVPSCHTSIPPS) are Extracellular-facing. Residue Asn8 is glycosylated (N-linked (GlcNAc...) asparagine). A helical transmembrane segment spans residues 51 to 71 (LYHACLASLSILVLLLLAMLV). The Cytoplasmic segment spans residues 72–98 (RRRQLWPDCVRGRPGLPSPVDFLAGDR). Residues 99 to 119 (PQAVPAAVFVVLFSSLCLLLP) form a helical membrane-spanning segment. The Extracellular portion of the chain corresponds to 120–144 (DEDPLPFLTLASAPSQDGKTEAPRG). The helical transmembrane segment at 145 to 165 (AWKILGLFYYAALCYPLAACA) threads the bilayer. At 166–168 (TAG) the chain is on the cytoplasmic side. Residues 169–189 (HTAAHLLGSTLSWAHLGVQVW) form a helical membrane-spanning segment. At 190–205 (QRAECPQVPKIYKYYS) the chain is on the extracellular side. The helical transmembrane segment at 206-226 (LLASLPLLLGLGFLSLWYPVQ) threads the bilayer. At 227–295 (LVRSFSCRTG…PQPGFRLPLK (69 aa)) the chain is on the cytoplasmic side. Positions 235–293 (TGAGSKGLQSSYSEEYLRNLLCRKKLGSSSHTSKHGFLSWAWVCLRHCIYTPQPGFRLP) are interaction with RBP1. A helical transmembrane segment spans residues 296–316 (LVLSATLTGTAIYQVALLLLV). The Extracellular portion of the chain corresponds to 317 to 367 (GMVPNIQKVRAGVTTDVSYLLAGFGIVLSEDKQEVVELVKHHLWALEVCYI). A helical transmembrane segment spans residues 368 to 388 (SALVLSCSLTFLVLMRSLVTH). The Cytoplasmic segment spans residues 389 to 422 (RTNLRALHRGAALDSSPLHRSPHPSRRAIFCWMS). Residues 423-443 (FSAYQTAFICLGLLVQQIIFF) traverse the membrane as a helical segment. Topologically, residues 444–473 (LGTTALAFLVLMPVLHGRNLLLFRSLESSW) are extracellular. Residues 474–494 (PFWLTLALAVILQSMAAHWVF) form a helical membrane-spanning segment. At 495–509 (LETHDGHPQLTNRRV) the chain is on the cytoplasmic side. The helical intramembrane region spans 510-547 (LYAATFLLFPLNVLVGAMVATWRVLLSALYNAIHLGQM). Residues 548 to 667 (DLSLLPPRAA…ALLGANGAQP (120 aa)) are Cytoplasmic-facing. Tyr643 is modified (phosphotyrosine).

Homodimer. Interacts with JAK2 and STAT5. Interacts (via extracellular domains) with RBP4. Interacts (via cytoplasmic domains) with RBP1. In terms of processing, phosphorylated on tyrosine residues in response to RBP4 binding. Phosphorylation requires the presence of LRAT, suggesting it may be triggered by the uptake of retinol that is then metabolized within the cell to retinoids that function as signaling molecules.

It localises to the cell membrane. Functionally, functions as a retinol transporter. Accepts all-trans retinol from the extracellular retinol-binding protein RBP4, facilitates retinol transport across the cell membrane, and then transfers retinol to the cytoplasmic retinol-binding protein RBP1. Retinol uptake is enhanced by LRAT, an enzyme that converts retinol to all-trans retinyl esters, the storage forms of vitamin A. Contributes to the activation of a signaling cascade that depends on retinol transport and LRAT-dependent generation of retinol metabolites that then trigger activation of JAK2 and its target STAT5, and ultimately increase the expression of SOCS3 and inhibit cellular responses to insulin. Important for the homeostasis of vitamin A and its derivatives, such as retinoic acid. STRA6-mediated transport is particularly important in the eye, and under conditions of dietary vitamin A deficiency. Does not transport retinoic acid. This chain is Receptor for retinol uptake STRA6 (STRA6), found in Pongo abelii (Sumatran orangutan).